A 69-amino-acid chain; its full sequence is Chondroitin proteoglycan 9 (69 aa).

Residues 1-19 (MHLWQLVLLVILFFGAAFG) form the signal peptide. O-linked (Xyl...) (chondroitin sulfate) serine glycosylation is found at Ser25 and Ser27.

In Caenorhabditis elegans, this protein is Chondroitin proteoglycan 9.